The chain runs to 490 residues: Katanin p60 ATPase-containing subunit A-like 1 (490 aa).

Methionine 1 is modified (N-acetylmethionine). Residues 87-182 (SCQDEPVRDP…ASDGEIPKFD (96 aa)) form a disordered region. Over residues 116–127 (SNREVRPLRKDM) the composition is skewed to basic and acidic residues. Positions 128–139 (AGVGARGPVGRA) are enriched in low complexity. Over residues 143–169 (SKSEKPSTSRDKDNRARGKDDKGRKNM) the composition is skewed to basic and acidic residues. Position 174 is a phosphoserine (serine 174). 248-255 (GPPGTGKT) is a binding site for ATP.

This sequence belongs to the AAA ATPase family. Katanin p60 subunit A1 subfamily. A-like 1 sub-subfamily. In terms of assembly, interacts with KATNB1 and KATNBL1.

The protein localises to the cytoplasm. It localises to the cytoskeleton. The protein resides in the spindle pole. It is found in the spindle. The enzyme catalyses n ATP + n H2O + a microtubule = n ADP + n phosphate + (n+1) alpha/beta tubulin heterodimers.. Functionally, regulates microtubule dynamics in Sertoli cells, a process that is essential for spermiogenesis and male fertility. Severs microtubules in an ATP-dependent manner, promoting rapid reorganization of cellular microtubule arrays. Has microtubule-severing activity in vitro. The chain is Katanin p60 ATPase-containing subunit A-like 1 from Otolemur garnettii (Small-eared galago).